A 370-amino-acid chain; its full sequence is 3-isopropylmalate dehydrogenase (370 aa).

77-90 lines the NAD(+) pocket; it reads GPKWDAVPYDARPE. 4 residues coordinate substrate: R97, R107, R135, and D226. Residues D226, D250, and D254 each coordinate Mg(2+). NAD(+) is bound at residue 290-302; the sequence is GSAPDIAGKGLAN.

Belongs to the isocitrate and isopropylmalate dehydrogenases family. LeuB type 1 subfamily. Homodimer. Mg(2+) serves as cofactor. The cofactor is Mn(2+).

Its subcellular location is the cytoplasm. It catalyses the reaction (2R,3S)-3-isopropylmalate + NAD(+) = 4-methyl-2-oxopentanoate + CO2 + NADH. It functions in the pathway amino-acid biosynthesis; L-leucine biosynthesis; L-leucine from 3-methyl-2-oxobutanoate: step 3/4. Functionally, catalyzes the oxidation of 3-carboxy-2-hydroxy-4-methylpentanoate (3-isopropylmalate) to 3-carboxy-4-methyl-2-oxopentanoate. The product decarboxylates to 4-methyl-2 oxopentanoate. This chain is 3-isopropylmalate dehydrogenase, found in Rhodopseudomonas palustris (strain HaA2).